We begin with the raw amino-acid sequence, 543 residues long: Efflux pump mokI (543 aa).

13 helical membrane-spanning segments follow: residues 30-50, 90-110, 125-145, 153-173, 185-205, 233-253, 261-281, 307-327, 340-360, 364-384, 394-416, 428-448, and 509-529; these read LVVT…SIIV, LLTL…GSAL, AVAG…LASA, LLIG…PLLG, CFYI…AIHI, LLGF…LEWG, SSVI…FGFW, LFLG…PIYF, VYML…GAII, GYYI…AGLV, AAWV…TPII, ALGI…FLTL, and VGAS…GLIW.

Belongs to the major facilitator superfamily. TCR/Tet family.

It is found in the membrane. In terms of biological role, efflux pump; part of the gene cluster that mediates the biosynthesis of monakolin K, also known as lovastatin, and which acts as a potent competitive inhibitor of HMG-CoA reductase. The polypeptide is Efflux pump mokI (Monascus pilosus (Red mold)).